Consider the following 296-residue polypeptide: Homoserine kinase (296 aa).

An ATP-binding site is contributed by 92–102 (PQSRGLGSSAA).

Belongs to the GHMP kinase family. Homoserine kinase subfamily.

It is found in the cytoplasm. It carries out the reaction L-homoserine + ATP = O-phospho-L-homoserine + ADP + H(+). Its pathway is amino-acid biosynthesis; L-threonine biosynthesis; L-threonine from L-aspartate: step 4/5. Functionally, catalyzes the ATP-dependent phosphorylation of L-homoserine to L-homoserine phosphate. This is Homoserine kinase from Cutibacterium acnes (strain DSM 16379 / KPA171202) (Propionibacterium acnes).